The sequence spans 359 residues: MTSASKGILRPFLIVCIILACSMVCLFIYIKPTNSWIFSPMESASSVLKMKNFFSTKTGDFNETTILIWVWPFGQTFDLTSCQAMFNIQGCHLTTDRSLYNKSHAVLIHHRDISWDLTNLPQQARPPFQKWIWMNLESPTHTPQKSGIEHLFNLTLTYRRDSDIQVPYGFLTVSTNPFVFEVPNKEKLVCWVVSNWNPEHARVKYYNELSKSIEIHTYGQAFGEYVTDKNLIPTISTCKFYLSFENSIHKDYITEKLYNAFLAGSVPVVLGPSRENYENYIPADSFIHVEDYNSPSELAKYLKEVDKNNKLYLSYFNWRKDFTVNLPRFWESHACLACDHVKRHQEYKSVGNLEKWFWN.

Topologically, residues 1–11 (MTSASKGILRP) are cytoplasmic. Residues 12-32 (FLIVCIILACSMVCLFIYIKP) traverse the membrane as a helical; Signal-anchor for type II membrane protein segment. Over 33-359 (TNSWIFSPME…VGNLEKWFWN (327 aa)) the chain is Lumenal. Asparagine 62 carries an N-linked (GlcNAc...) asparagine glycan. The acceptor-binding stretch occupies residues 63 to 168 (ETTILIWVWP…RRDSDIQVPY (106 aa)). Glutamine 75 is an a beta-D-galactosyl-(1-&gt;4)-N-acetyl-beta-D-glucosaminyl derivative binding site. Disulfide bonds link cysteine 82–cysteine 335, cysteine 91–cysteine 338, and cysteine 190–cysteine 238. The N-linked (GlcNAc...) asparagine glycan is linked to asparagine 101. Glutamate 137 serves as a coordination point for a beta-D-galactosyl-(1-&gt;4)-N-acetyl-beta-D-glucosaminyl derivative. The active-site Nucleophile is glutamate 137. Glutamate 137 contributes to the GDP-beta-L-fucose binding site. Asparagine 153 carries an N-linked (GlcNAc...) asparagine glycan. GDP-beta-L-fucose is bound by residues tyrosine 168, valine 192, serine 194, asparagine 195, arginine 202, valine 226, tyrosine 241, asparagine 246, tyrosine 252, glutamate 255, and lysine 256. Residues 169 to 326 (GFLTVSTNPF…NWRKDFTVNL (158 aa)) form a donor-binding region. The tract at residues 327 to 359 (PRFWESHACLACDHVKRHQEYKSVGNLEKWFWN) is acceptor-binding.

The protein belongs to the glycosyltransferase 10 family. Homodimer. N-glycosylated with complex-type N-glycans.

It is found in the golgi apparatus. The protein resides in the trans-Golgi network membrane. It localises to the golgi apparatus membrane. The catalysed reaction is a beta-D-galactosyl-(1-&gt;4)-N-acetyl-beta-D-glucosaminyl derivative + GDP-beta-L-fucose = a beta-D-galactosyl-(1-&gt;4)-[alpha-L-fucosyl-(1-&gt;3)]-N-acetyl-beta-D-glucosaminyl derivative + GDP + H(+). It carries out the reaction an alpha-Neu5Ac-(2-&gt;3)-beta-D-Gal-(1-&gt;4)-beta-D-GlcNAc-(1-&gt;3)-beta-D-Gal-(1-&gt;4)-beta-D-GlcNAc derivative + GDP-beta-L-fucose = an alpha-Neu5Ac-(2-&gt;3)-beta-D-Gal-(1-&gt;4)-beta-D-GlcNAc-(1-&gt;3)-beta-D-Gal-(1-&gt;4)-[alpha-L-Fuc-(1-&gt;3)]-beta-D-GlcNAc derivative + GDP + H(+). It catalyses the reaction alpha-N-glycoloylneuraminosyl-(2-&gt;3)-beta-D-galactosyl-(1-&gt;4)-N-acetyl-beta-D-glucosaminyl-(1-&gt;3)-beta-D-galactosyl-(1-&gt;4)-N-acetyl-beta-D-glucosaminyl-(1-&gt;3)-beta-D-galactosyl-(1-&gt;4)-beta-D-glucosyl-(1&lt;-&gt;1')-ceramide + GDP-beta-L-fucose = alpha-N-glycoloylneuraminosyl-(2-&gt;3)-beta-D-galactosyl-(1-&gt;4)-N-acetyl-beta-D-glucosaminyl-(1-&gt;3)-beta-D-galactosyl-(1-&gt;4)-[alpha-L-fucosyl-(1-&gt;3)]-N-acetyl-beta-D-glucosaminyl-(1-&gt;3)-beta-D-galactosyl-(1-&gt;4)-beta-D-glucosyl-(1&lt;-&gt;1')-ceramide + GDP + H(+). The enzyme catalyses alpha-D-galactosyl-(1-&gt;3)-beta-D-galactosyl-(1-&gt;4)-N-acetyl-beta-D-glucosaminyl-(1-&gt;3)-beta-D-galactosyl-(1-&gt;4)-beta-D-glucosyl-(1&lt;-&gt;1')-ceramide + GDP-beta-L-fucose = a neolactoside IV(3)-alpha-Gal,III(3)-alpha-Fuc-nLc4Cer + GDP + H(+). The catalysed reaction is a neolactoside nLc4Cer + GDP-beta-L-fucose = a neolactoside III(3)-alpha-Fuc-nLc4Cer + GDP + H(+). It carries out the reaction an N-acetyl-alpha-neuraminyl-(2-&gt;3)-beta-D-galactosyl-(1-&gt;4)-N-acetyl-beta-D-glucosaminyl derivative + GDP-beta-L-fucose = an alpha-Neu5Ac-(2-&gt;3)-beta-D-Gal-(1-&gt;4)-[alpha-L-Fuc-(1-&gt;3)]-beta-D-GlcNAc derivative + GDP + H(+). It catalyses the reaction beta-D-Gal-(1-&gt;4)-beta-D-GlcNAc-(1-&gt;3)-beta-D-Gal-(1-&gt;4)-D-Glc + GDP-beta-L-fucose = beta-D-Gal-(1-&gt;4)-[alpha-L-Fuc-(1-&gt;3)]-beta-D-GlcNAc-(1-&gt;3)-beta-D-Gal-(1-&gt;4)-D-Glc + GDP + H(+). The enzyme catalyses an alpha-L-Fuc-(1-&gt;2)-beta-D-Gal-(1-&gt;4)-beta-D-GlcNAc derivative + GDP-beta-L-fucose = an alpha-L-Fuc-(1-&gt;2)-beta-D-Gal-(1-&gt;4)-[alpha-L-Fuc-(1-&gt;3)]-beta-D-GlcNAc derivative + GDP + H(+). It functions in the pathway protein modification; protein glycosylation. Its pathway is glycolipid biosynthesis. With respect to regulation, activated by Mn2+. Its function is as follows. Catalyzes alpha(1-&gt;3) linkage of fucosyl moiety transferred from GDP-beta-L-fucose to N-acetyl glucosamine (GlcNAc) within type 2 lactosamine (LacNAc, beta-D-Gal-(1-&gt;4)-beta-D-GlcNAc-) glycan attached to glycolipids and N- or O-linked glycoproteins. Fucosylates distal type 2 LacNAc and its fucosylated (H-type 2 LacNAc) and sialylated (sialyl-type 2 LacNAc) derivatives to form Lewis x (Lex) (CD15) and Lewis y (Ley) antigenic epitopes involved in cell adhesion and differentiation. Generates Lex epitopes in the brain, presumably playing a role in the maintenance of neuronal stemness and neurite outgrowth in progenitor neural cells. Fucosylates the internal type 2 LacNAc unit of the polylactosamine chain to form VIM-2 antigen that serves as recognition epitope for SELE. Can also modify milk oligosaccharides in particular type 2 tetrasaccharide LNnT. This is 4-galactosyl-N-acetylglucosaminide 3-alpha-L-fucosyltransferase 9 from Bos taurus (Bovine).